The sequence spans 208 residues: Large ribosomal subunit protein uL4 (208 aa).

The segment at 58–77 is disordered; it reads RGGGRKPWRQKGTGRARQGS. Residues 60–71 show a composition bias toward basic residues; it reads GGRKPWRQKGTG.

Belongs to the universal ribosomal protein uL4 family. As to quaternary structure, part of the 50S ribosomal subunit.

Its function is as follows. One of the primary rRNA binding proteins, this protein initially binds near the 5'-end of the 23S rRNA. It is important during the early stages of 50S assembly. It makes multiple contacts with different domains of the 23S rRNA in the assembled 50S subunit and ribosome. Forms part of the polypeptide exit tunnel. The chain is Large ribosomal subunit protein uL4 from Caldicellulosiruptor bescii (strain ATCC BAA-1888 / DSM 6725 / KCTC 15123 / Z-1320) (Anaerocellum thermophilum).